The sequence spans 216 residues: Adenylate kinase (216 aa).

10-15 (GAGKGT) lines the ATP pocket. Residues 30 to 59 (STGDMFRAAMKAETELGLQAKSFIDKGALV) form an NMP region. AMP is bound by residues threonine 31, arginine 36, 57–59 (ALV), 85–88 (GFPR), and glutamine 92. Residues 126–163 (GRRICKECGATYHLEFNPPAKADVCDKCGGELYQRSDD) form an LID region. Arginine 127 contacts ATP. Zn(2+) contacts are provided by cysteine 130 and cysteine 133. ATP is bound at residue 136–137 (TY). Cysteine 150 and cysteine 153 together coordinate Zn(2+). Arginine 160 and arginine 171 together coordinate AMP. Residue glutamine 199 participates in ATP binding.

This sequence belongs to the adenylate kinase family. As to quaternary structure, monomer.

The protein resides in the cytoplasm. It catalyses the reaction AMP + ATP = 2 ADP. The protein operates within purine metabolism; AMP biosynthesis via salvage pathway; AMP from ADP: step 1/1. Its function is as follows. Catalyzes the reversible transfer of the terminal phosphate group between ATP and AMP. Plays an important role in cellular energy homeostasis and in adenine nucleotide metabolism. This is Adenylate kinase from Bacillus cytotoxicus (strain DSM 22905 / CIP 110041 / 391-98 / NVH 391-98).